We begin with the raw amino-acid sequence, 396 residues long: Bone morphogenetic protein 2 (396 aa).

An N-terminal signal peptide occupies residues 1–23 (MVAGTRCLLALLLPQVLLGGAAG). Residues 24-282 (LVPELGRRKF…GHPLHKREKR (259 aa)) constitute a propeptide, cleaved by PCSK5. Positions 84-121 (RRHSGQPGSPAPDHRLERAASRANTVRSFHHEESLEEL) are disordered. Ser-87 carries the post-translational modification Phosphoserine. N-linked (GlcNAc...) asparagine glycosylation is found at Asn-135, Asn-163, Asn-164, and Asn-200. A disordered region spans residues 271 to 293 (GKGHPLHKREKRQAKHKQRKRLK). Residues 274 to 293 (HPLHKREKRQAKHKQRKRLK) are compositionally biased toward basic residues. Disulfide bonds link Cys-296-Cys-361, Cys-325-Cys-393, and Cys-329-Cys-395. Asn-338 is a glycosylation site (N-linked (GlcNAc...) (high mannose) asparagine).

The protein belongs to the TGF-beta family. In terms of assembly, homodimer; disulfide-linked. Interacts with SOSTDC1. Interacts with GREM2, RGMA, RGMB and RGMC. Interacts with ASPN. Interacts with MAFP5. Interacts with FBN1 (via N-terminal domain) and FBN2. Interacts with type I receptor BMPR1A. Interacts with type II receptor BMPR2. Interacts with SCUBE3. Interacts with TNFAIP6 (primarily via Link domain); this interaction is inhibited by hyaluronan. Interacts with ERFE. Interacts with BMPR1A/ALK3; the interaction may induce HAMP expression. Forms heterodimers with BMP6 in vitro; the heterodimer then binds to its receptor BMPR1A /ALK3 and may induce HAMP expression. Interacts with TGFBR3. In terms of tissue distribution, particularly abundant in lung, spleen and colon and in low but significant levels in heart, brain, placenta, liver, skeletal muscle, kidney, pancreas, prostate, ovary and small intestine.

It is found in the secreted. Its function is as follows. Growth factor of the TGF-beta superfamily that plays essential roles in many developmental processes, including cardiogenesis, neurogenesis, and osteogenesis. Induces cartilage and bone formation. Initiates the canonical BMP signaling cascade by associating with type I receptor BMPR1A and type II receptor BMPR2. Once all three components are bound together in a complex at the cell surface, BMPR2 phosphorylates and activates BMPR1A. In turn, BMPR1A propagates signal by phosphorylating SMAD1/5/8 that travel to the nucleus and act as activators and repressors of transcription of target genes. Also acts to promote expression of HAMP, via the interaction with its receptor BMPR1A/ALK3. Can also signal through non-canonical pathways such as ERK/MAP kinase signaling cascade that regulates osteoblast differentiation. Also stimulates the differentiation of myoblasts into osteoblasts via the EIF2AK3-EIF2A-ATF4 pathway by stimulating EIF2A phosphorylation which leads to increased expression of ATF4 which plays a central role in osteoblast differentiation. Acts as a positive regulator of odontoblast differentiation during mesenchymal tooth germ formation, expression is repressed during the bell stage by MSX1-mediated inhibition of CTNNB1 signaling. In Homo sapiens (Human), this protein is Bone morphogenetic protein 2 (BMP2).